A 505-amino-acid chain; its full sequence is DEAD-box ATP-dependent RNA helicase 8 (505 aa).

The tract at residues 1–85 (MNNRGRYPPG…GQIPGGNSNG (85 aa)) is disordered. Over residues 20–31 (PNPNYQSRSGYQ) the composition is skewed to polar residues. Positions 43-71 (NYAQNHQQQFQQAPSQPHQYQQQQQQQQQ) are enriched in low complexity. A Q motif motif is present at residues 131–159 (NEFEDYFLKRELLMGIYEKGFERPSPIQE). One can recognise a Helicase ATP-binding domain in the interval 162–332 (IPIALTGRDI…DRFLTNPYVI (171 aa)). Residue 175–182 (AKNGTGKT) participates in ATP binding. Thr237 is subject to Phosphothreonine. A DEAD box motif is present at residues 280-283 (DEAD). Positions 342 to 502 (GITQFYAFVE…QIPPHIDQAI (161 aa)) constitute a Helicase C-terminal domain.

The protein belongs to the DEAD box helicase family. DDX6/DHH1 subfamily.

It is found in the cytoplasm. The protein localises to the P-body. It carries out the reaction ATP + H2O = ADP + phosphate + H(+). In terms of biological role, ATP-dependent RNA helicase involved in mRNA turnover, and more specifically in mRNA decapping. This Arabidopsis thaliana (Mouse-ear cress) protein is DEAD-box ATP-dependent RNA helicase 8 (RH8).